A 213-amino-acid polypeptide reads, in one-letter code: Small ribosomal subunit protein uS5 (213 aa).

Residues 1–41 (MSGRERNGGRSAENNDKKERNERNGRNDRGGRNDRRNQQDE) are disordered. Positions 45–108 (FIERVVTINR…EEARKNFFRV (64 aa)) constitute an S5 DRBM domain.

Belongs to the universal ribosomal protein uS5 family. In terms of assembly, part of the 30S ribosomal subunit. Contacts proteins S4 and S8.

With S4 and S12 plays an important role in translational accuracy. Functionally, located at the back of the 30S subunit body where it stabilizes the conformation of the head with respect to the body. This is Small ribosomal subunit protein uS5 from Corynebacterium jeikeium (strain K411).